The sequence spans 89 residues: MSVKIRLMRLGAKKKPFYRVVVSDSRVQRDGKFIEHVGFYDPMVPCGEPGFLKIDAERLSYWLGVGAQPTDRVSWFIKKGFVEVRPAGA.

The protein belongs to the bacterial ribosomal protein bS16 family.

This Anaplasma marginale (strain Florida) protein is Small ribosomal subunit protein bS16.